A 399-amino-acid polypeptide reads, in one-letter code: Exodeoxyribonuclease 7 large subunit (399 aa).

It belongs to the XseA family. Heterooligomer composed of large and small subunits.

The protein localises to the cytoplasm. It carries out the reaction Exonucleolytic cleavage in either 5'- to 3'- or 3'- to 5'-direction to yield nucleoside 5'-phosphates.. Functionally, bidirectionally degrades single-stranded DNA into large acid-insoluble oligonucleotides, which are then degraded further into small acid-soluble oligonucleotides. The protein is Exodeoxyribonuclease 7 large subunit of Clostridium beijerinckii (strain ATCC 51743 / NCIMB 8052) (Clostridium acetobutylicum).